A 489-amino-acid polypeptide reads, in one-letter code: Diacylglycerol O-acyltransferase 1 (489 aa).

Positions 1–54 (MGDRGGAGGSRRRRTGSRPSIQGGSGPAAAEEEVRDVGAGGDAPVRDTDKDGDV) are disordered. Residues 1-80 (MGDRGGAGGS…SLFSSDSGFS (80 aa)) lie on the Cytoplasmic side of the membrane. The segment at 1–88 (MGDRGGAGGS…FSNYRGILNW (88 aa)) is involved in homomerization. Phosphoserine is present on S20. The span at 44 to 53 (PVRDTDKDGD) shows a compositional bias: basic and acidic residues. Residues 81 to 115 (NYRGILNWCVVMLILSNARLFLENLIKYGILVDPI) form a helical membrane-spanning segment. Residues 116-127 (QVVSLFLKDPYS) are Lumenal-facing. Residues 116–127 (QVVSLFLKDPYS) are extracellular loop 1 (EL1). A helical transmembrane segment spans residues 128–153 (WPALCLVIVANIFAVAAFQVEKRLAV). Positions 128–489 (WPALCLVIVA…LNREAPAAGT (362 aa)) are MBOAT fold. Over 154 to 158 (GALTE) the chain is Cytoplasmic. The helical transmembrane segment at 159-181 (QAGLLLHGVNLATILCFPAAVAF) threads the bilayer. Residues 182-188 (LLESITP) are Lumenal-facing. Residues 189 to 220 (VGSVLALMVYTILFLKLFSYRDVNLWCRERRA) traverse the membrane as a helical segment. Over 221-274 (GAKAKAALAGKKANGGAAQRTVSYPDNLTYRDLYYFLFAPTLCYELNFPRSPRI) the chain is Cytoplasmic. Residues 225–277 (KAALAGKKANGGAAQRTVSYPDNLTYRDLYYFLFAPTLCYELNFPRSPRIRKR) are intracellular loop 1 (IL1). The helical transmembrane segment at 275 to 309 (RKRFLLRRLLEMLFLTQLQVGLIQQWMVPAIQNSM) threads the bilayer. The Lumenal portion of the chain corresponds to 310 to 316 (KPFKDMD). A helical transmembrane segment spans residues 317–354 (YSRIVERLLKLAVPNHLIWLIFFYWLFHSCLNAVAELM). The Cytoplasmic segment spans residues 355 to 400 (QFGDREFYRDWWNSESITYFWQNWNIPVHKWCIRHFYKPMLRRGSS). An intracellular loop 2 (IL2) region spans residues 355-400 (QFGDREFYRDWWNSESITYFWQNWNIPVHKWCIRHFYKPMLRRGSS). The short motif at 361–367 (FYRDWWN) is the FYXDWWN motif element. An acyl-CoA is bound by residues 375–383 (WQNWNIPVH), Y391, and R405. Residues 381-395 (PVHKWCIRHFYKPML) form an amphipathic helix (AH) region. The helical transmembrane segment at 401 to 421 (KWAARTAVFLASAFFHEYLVS) threads the bilayer. H416 is a catalytic residue. Over 422 to 429 (IPLRMFRL) the chain is Lumenal. The helical transmembrane segment at 430–448 (WAFTGMMAQIPLAWIVGRF) threads the bilayer. Over 449 to 450 (FR) the chain is Cytoplasmic. The helical transmembrane segment at 451-482 (GNYGNAAVWLSLIIGQPVAVLMYVHDYYVLNR) threads the bilayer. Residue Y478 coordinates an acyl-CoA. The Lumenal portion of the chain corresponds to 483–489 (EAPAAGT).

It belongs to the membrane-bound acyltransferase family. Sterol o-acyltransferase subfamily. As to quaternary structure, homodimer or homotetramer; both forms have similar enzymatic activities.

It localises to the endoplasmic reticulum membrane. It carries out the reaction an acyl-CoA + a 1,2-diacyl-sn-glycerol = a triacyl-sn-glycerol + CoA. The enzyme catalyses all-trans-retinol + an acyl-CoA = an all-trans-retinyl ester + CoA. It catalyses the reaction 2-(9Z-octadecenoyl)-glycerol + (9Z)-octadecenoyl-CoA = 1,2-di-(9Z-octadecenoyl)-sn-glycerol + CoA. The catalysed reaction is 1,2-di-(9Z-octadecenoyl)-sn-glycerol + (9Z)-octadecenoyl-CoA = 1,2,3-tri-(9Z-octadecenoyl)-glycerol + CoA. It carries out the reaction all-trans-retinol + hexadecanoyl-CoA = all-trans-retinyl hexadecanoate + CoA. The enzyme catalyses 1-O-(9Z-octadecenyl)-glycerol + (9Z)-octadecenoyl-CoA = 1-O-(9Z-octadecyl)-3-(9Z-octadecenoyl)-glycerol + CoA. It catalyses the reaction 1-O-(9Z-octadecyl)-3-(9Z-octadecenoyl)-glycerol + (9Z)-octadecenoyl-CoA = 1-O-(9Z-octadecenyl)-2,3-di-(9Z-octadecenoyl)glycerol + CoA. The catalysed reaction is 1-(9Z-octadecenoyl)-glycerol + (9Z)-octadecenoyl-CoA = 1,2-di-(9Z-octadecenoyl)-glycerol + CoA. It carries out the reaction 1,2-di-(9Z-octadecenoyl)-glycerol + (9Z)-octadecenoate + H(+) = 1,2,3-tri-(9Z-octadecenoyl)-glycerol + H2O. The enzyme catalyses 1-octadecanoyl-2-(5Z,8Z,11Z,14Z-eicosatetraenoyl)-sn-glycerol + (9Z)-octadecenoyl-CoA = 1-octadecanoyl-2-(5Z,8Z,11Z,14Z)-eicosatetraenoyl-3-(9Z)-octadecenoyl-sn-glycerol + CoA. It catalyses the reaction hexadecane-1,2-diol + 2 hexadecanoyl-CoA = 1,2-O,O-dihexadecanoyl-1,2-hexadecanediol + 2 CoA. The catalysed reaction is hexadecane-1,2-diol + hexadecanoyl-CoA = 2-hydroxyhexadecyl hexadecanoate + CoA. It carries out the reaction 2-(9Z-octadecenoyl)-glycerol + hexadecanoyl-CoA = 1-hexadecanoyl-2-(9Z-octadecenoyl)-sn-glycerol + CoA. The enzyme catalyses 1,2-di-(9Z-octadecenoyl)-sn-glycerol + hexadecanoyl-CoA = 1,2-di-(9Z)-octadecenoyl-3-hexadecanoyl-sn-glycerol + CoA. It catalyses the reaction hexadecan-1-ol + hexadecanoyl-CoA = hexadecanyl hexadecanoate + CoA. The catalysed reaction is 13-cis-retinol + hexadecanoyl-CoA = 13-cis-retinyl hexadecanoate + CoA. It carries out the reaction 1,3-di-(9Z-octadecenoyl)-glycerol + (9Z)-octadecenoyl-CoA = 1,2,3-tri-(9Z-octadecenoyl)-glycerol + CoA. The enzyme catalyses 2,3-di-(9Z)-octadecenoyl-sn-glycerol + (9Z)-octadecenoyl-CoA = 1,2,3-tri-(9Z-octadecenoyl)-glycerol + CoA. It functions in the pathway lipid metabolism; glycerolipid metabolism. Its function is as follows. Catalyzes the terminal and only committed step in triacylglycerol synthesis by using diacylglycerol and fatty acyl CoA as substrates. Highly expressed in epithelial cells of the small intestine and its activity is essential for the absorption of dietary fats. In liver, plays a role in esterifying exogenous fatty acids to glycerol, and is required to synthesize fat for storage. Also present in female mammary glands, where it produces fat in the milk. May be involved in VLDL (very low density lipoprotein) assembly. In contrast to DGAT2 it is not essential for survival. Functions as the major acyl-CoA retinol acyltransferase (ARAT) in the skin, where it acts to maintain retinoid homeostasis and prevent retinoid toxicity leading to skin and hair disorders. Exhibits additional acyltransferase activities, includin acyl CoA:monoacylglycerol acyltransferase (MGAT), wax monoester and wax diester synthases. Also able to use 1-monoalkylglycerol (1-MAkG) as an acyl acceptor for the synthesis of monoalkyl-monoacylglycerol (MAMAG). The polypeptide is Diacylglycerol O-acyltransferase 1 (DGAT1) (Bos taurus (Bovine)).